A 603-amino-acid polypeptide reads, in one-letter code: UvrABC system protein C (603 aa).

One can recognise a GIY-YIG domain in the interval 17-94; it reads TTSGCYKMLN…IKTHKPDYNV (78 aa).

This sequence belongs to the UvrC family. As to quaternary structure, interacts with UvrB in an incision complex.

It localises to the cytoplasm. Functionally, the UvrABC repair system catalyzes the recognition and processing of DNA lesions. UvrC both incises the 5' and 3' sides of the lesion. The N-terminal half is responsible for the 3' incision and the C-terminal half is responsible for the 5' incision. The sequence is that of UvrABC system protein C from Borreliella burgdorferi (strain ATCC 35210 / DSM 4680 / CIP 102532 / B31) (Borrelia burgdorferi).